The chain runs to 1342 residues: DNA-directed RNA polymerase subunit beta (1342 aa).

The protein belongs to the RNA polymerase beta chain family. The RNAP catalytic core consists of 2 alpha, 1 beta, 1 beta' and 1 omega subunit. When a sigma factor is associated with the core the holoenzyme is formed, which can initiate transcription.

The catalysed reaction is RNA(n) + a ribonucleoside 5'-triphosphate = RNA(n+1) + diphosphate. DNA-dependent RNA polymerase catalyzes the transcription of DNA into RNA using the four ribonucleoside triphosphates as substrates. This Mannheimia succiniciproducens (strain KCTC 0769BP / MBEL55E) protein is DNA-directed RNA polymerase subunit beta.